An 86-amino-acid chain; its full sequence is MATSGRLLCVCLVMGLVFESLGYLTGREKRPAENLEASVQRRWYLNRRYEVDCGGVLCQFGCCEDDRCRELGCEFMDVLSRIRSAE.

A signal peptide spans 1–21 (MATSGRLLCVCLVMGLVFESL). Residues 22-46 (GYLTGREKRPAENLEASVQRRWYLN) constitute a propeptide that is removed on maturation.

Belongs to the teretoxin M (TM) superfamily. In terms of processing, contains 3 disulfide bonds. In terms of tissue distribution, expressed by the venom duct.

It is found in the secreted. This chain is Teretoxin Tsu6.16, found in Terebra subulata (Chocolate spotted auger).